A 343-amino-acid polypeptide reads, in one-letter code: Probable 4-hydroxy-tetrahydrodipicolinate reductase 1, chloroplastic (343 aa).

Residues 1 to 14 (MLASTFATHPAAAA) constitute a chloroplast transit peptide. NAD(+) is bound by residues 167 to 169 (GTT) and 190 to 193 (SPQM). The active-site Proton donor/acceptor is His-226. Lys-230 functions as the Proton donor in the catalytic mechanism. Position 235–236 (235–236 (GT)) interacts with (S)-2,3,4,5-tetrahydrodipicolinate.

Belongs to the DapB family.

The protein resides in the plastid. It is found in the chloroplast. It catalyses the reaction (S)-2,3,4,5-tetrahydrodipicolinate + NAD(+) + H2O = (2S,4S)-4-hydroxy-2,3,4,5-tetrahydrodipicolinate + NADH + H(+). The enzyme catalyses (S)-2,3,4,5-tetrahydrodipicolinate + NADP(+) + H2O = (2S,4S)-4-hydroxy-2,3,4,5-tetrahydrodipicolinate + NADPH + H(+). It functions in the pathway amino-acid biosynthesis; L-lysine biosynthesis via DAP pathway; (S)-tetrahydrodipicolinate from L-aspartate: step 4/4. Functionally, catalyzes the conversion of 4-hydroxy-tetrahydrodipicolinate (HTPA) to tetrahydrodipicolinate. The sequence is that of Probable 4-hydroxy-tetrahydrodipicolinate reductase 1, chloroplastic (DAPB1) from Oryza sativa subsp. japonica (Rice).